Reading from the N-terminus, the 279-residue chain is Phosphate import ATP-binding protein PstB 1 (279 aa).

Residues 26–274 form the ABC transporter domain; that stretch reads VMDCKLDKIF…PREQLTSDYI (249 aa). 59 to 66 lines the ATP pocket; sequence GPSGCGKS.

Belongs to the ABC transporter superfamily. Phosphate importer (TC 3.A.1.7) family. In terms of assembly, the complex is composed of two ATP-binding proteins (PstB), two transmembrane proteins (PstC and PstA) and a solute-binding protein (PstS).

It localises to the cell inner membrane. The enzyme catalyses phosphate(out) + ATP + H2O = ADP + 2 phosphate(in) + H(+). Functionally, part of the ABC transporter complex PstSACB involved in phosphate import. Responsible for energy coupling to the transport system. The sequence is that of Phosphate import ATP-binding protein PstB 1 from Pseudomonas putida (strain ATCC 47054 / DSM 6125 / CFBP 8728 / NCIMB 11950 / KT2440).